A 625-amino-acid polypeptide reads, in one-letter code: Low affinity potassium transport system protein Kup (625 aa).

A run of 12 helical transmembrane segments spans residues 15–35 (TIFS…IYII), 58–78 (IIFW…IVSI), 103–123 (FVIV…IIII), 140–160 (LSFE…LFFI), 171–191 (IFSF…LKGI), 218–238 (FFVF…YINI), 251–271 (LFFV…IILL), 282–302 (FLVP…ISII), 340–360 (IYIP…ISIF), 366–386 (LILI…FFSL), 396–416 (FKIL…FIFI), and 422–442 (IICG…IMIT).

It belongs to the HAK/KUP transporter (TC 2.A.72) family.

It is found in the cell membrane. The enzyme catalyses K(+)(in) + H(+)(in) = K(+)(out) + H(+)(out). Functionally, responsible for the low-affinity transport of potassium into the cell. Likely operates as a K(+):H(+) symporter. This Wigglesworthia glossinidia brevipalpis protein is Low affinity potassium transport system protein Kup.